The sequence spans 285 residues: Shikimate dehydrogenase (NADP(+)) (285 aa).

Residues 22-24 (SRS) and T71 each bind shikimate. The Proton acceptor role is filled by K75. Residues N96 and D111 each contribute to the shikimate site. NADP(+) contacts are provided by residues 136–140 (GAGGA), 160–165 (NRTVGR), and I225. Shikimate is bound at residue Y227. Residue G248 participates in NADP(+) binding.

This sequence belongs to the shikimate dehydrogenase family. In terms of assembly, homodimer.

The catalysed reaction is shikimate + NADP(+) = 3-dehydroshikimate + NADPH + H(+). It participates in metabolic intermediate biosynthesis; chorismate biosynthesis; chorismate from D-erythrose 4-phosphate and phosphoenolpyruvate: step 4/7. In terms of biological role, involved in the biosynthesis of the chorismate, which leads to the biosynthesis of aromatic amino acids. Catalyzes the reversible NADPH linked reduction of 3-dehydroshikimate (DHSA) to yield shikimate (SA). The sequence is that of Shikimate dehydrogenase (NADP(+)) from Rhizobium etli (strain CIAT 652).